The following is a 229-amino-acid chain: MKYLNQQEAISVDEELFNEYKFSVDQLMELAGLSCAHAIADAYSPDRSNKVLICCGPGNNGGDGLVAARHLSLMSFVPYVYYPKRTDKELFKNLQHQAESMGITVSVDCPAGEWVEAEFGLIVDALFGFSFKPPVRESFRPIMEVLQKTKLPIVSVDIPSGWDVELGPQTDCDIMPDCLISLTAPKLCAKHLVNAKHYLGGRFVPGKLEEKYAMNLPAYKGRDLFVRLS.

A YjeF N-terminal domain is found at 9-216 (AISVDEELFN…KLEEKYAMNL (208 aa)). A (6S)-NADPHX-binding site is contributed by 59 to 63 (NNGGD). Residues N60 and D124 each contribute to the K(+) site. Residues 128–134 (GFSFKPP) and D157 contribute to the (6S)-NADPHX site. S160 provides a ligand contact to K(+).

The protein belongs to the NnrE/AIBP family. K(+) serves as cofactor.

It carries out the reaction (6R)-NADHX = (6S)-NADHX. The catalysed reaction is (6R)-NADPHX = (6S)-NADPHX. Functionally, catalyzes the epimerization of the S- and R-forms of NAD(P)HX, a damaged form of NAD(P)H that is a result of enzymatic or heat-dependent hydration. This is a prerequisite for the S-specific NAD(P)H-hydrate dehydratase to allow the repair of both epimers of NAD(P)HX. This chain is NAD(P)H-hydrate epimerase, found in Anopheles gambiae (African malaria mosquito).